The sequence spans 310 residues: Isoflavone reductase homolog A622 (310 aa).

NADP(+) is bound by residues 13-19 (GGTGYIG), Arg38, and Lys47. The active-site Proton acceptor is the Lys135. An NADP(+)-binding site is contributed by Arg139.

Belongs to the NmrA-type oxidoreductase family. Isoflavone reductase subfamily. As to quaternary structure, monomer. As to expression, expressed in roots and stems.

It is found in the cytoplasm. Its pathway is alkaloid biosynthesis; nicotine biosynthesis. NADPH-binding protein. Involved in the biosynthesis of pyridine alkaloid natural products, leading mainly to the production of anabasine, anatabine, nicotine and nornicotine, effective deterrents against herbivores with antiparasitic and pesticide properties (neurotoxins); nornicotine serves as the precursor in the synthesis of the carcinogen compound N'-nitrosonornicotine (NNN). Reductase involved in a late step of tobacco alkaloid biosynthesis. Triggers either the formation of a nicotinic acid-derived precursor or the final condensation reaction of tobacco alkaloids. In Nicotiana sylvestris (Wood tobacco), this protein is Isoflavone reductase homolog A622.